The sequence spans 287 residues: 4,4'-diapophytoene synthase (287 aa).

Residues 18–21 (HSKS), Tyr-41, and Arg-45 each bind (2E,6E)-farnesyl diphosphate. Mg(2+) is bound by residues Asp-48 and Asp-52. Residue Gln-165 coordinates (2E,6E)-farnesyl diphosphate. Asn-168 provides a ligand contact to Mg(2+). Position 171 (Arg-171) interacts with (2E,6E)-farnesyl diphosphate. Position 172 (Asp-172) interacts with Mg(2+). Position 248 (Tyr-248) interacts with (2E,6E)-farnesyl diphosphate.

Belongs to the phytoene/squalene synthase family. CrtM subfamily. Mg(2+) is required as a cofactor.

The enzyme catalyses 2 (2E,6E)-farnesyl diphosphate = 15-cis-4,4'-diapophytoene + 2 diphosphate. It functions in the pathway carotenoid biosynthesis; staphyloxanthin biosynthesis; staphyloxanthin from farnesyl diphosphate: step 1/5. Its function is as follows. Involved in the biosynthesis of the yellow-orange carotenoid staphyloxanthin, which plays a role in the virulence via its protective function against oxidative stress. Catalyzes the head-to-head condensation of two molecules of farnesyl diphosphate (FPP) into the colorless C(30) carotenoid 4,4'-diapophytoene (dehydrosqualene). The sequence is that of 4,4'-diapophytoene synthase (crtM) from Staphylococcus aureus (strain bovine RF122 / ET3-1).